A 254-amino-acid chain; its full sequence is Vitamin B12 import ATP-binding protein BtuD (254 aa).

An ABC transporter domain is found at 3 to 239 (INYISVGNRL…ENLQQVFETP (237 aa)). 29–36 (GPNGSGKS) is an ATP binding site.

The protein belongs to the ABC transporter superfamily. Vitamin B12 importer (TC 3.A.1.13.1) family. In terms of assembly, the complex is composed of two ATP-binding proteins (BtuD), two transmembrane proteins (BtuC) and a solute-binding protein (BtuF).

It localises to the cell inner membrane. The enzyme catalyses an R-cob(III)alamin(out) + ATP + H2O = an R-cob(III)alamin(in) + ADP + phosphate + H(+). Functionally, part of the ABC transporter complex BtuCDF involved in vitamin B12 import. Responsible for energy coupling to the transport system. This is Vitamin B12 import ATP-binding protein BtuD from Vibrio vulnificus (strain CMCP6).